The chain runs to 1649 residues: Formin-like protein 20 (1649 aa).

In terms of domain architecture, Phosphatase tensin-type spans 1 to 194 (MALFRRFFYK…QYISRRNLGS (194 aa)). The Phosphocysteine intermediate role is filled by Cys127. A C2 tensin-type domain is found at 200-339 (DTPLLLDCLI…FKAEVLFSGA (140 aa)). Disordered regions lie at residues 416–774 (DCAS…PWKS) and 787–1245 (STSQ…QKKS). Positions 421–483 (DSNHKHDMHA…RRTVEAKEND (63 aa)) are enriched in basic and acidic residues. Composition is skewed to polar residues over residues 500-513 (LESM…SLNK) and 585-597 (RINS…TTSL). Basic and acidic residues predominate over residues 598–616 (KDGKRATSPDGVIPKDAKT). Positions 648–662 (SLPPASPHQAPPPLP) are enriched in pro residues. The segment covering 665 to 678 (TSEAKTVLHSSQAV) has biased composition (polar residues). Composition is skewed to pro residues over residues 680–691 (SPPPPPPPPPLP), 701–711 (LPPPPPPPPPF), 722–732 (LPPPPPPPPPF), 743–752 (LPPPPPPPLP), and 795–804 (SPTPPPPPPA). Residues 809 to 820 (GQKSSDLQTSQL) are compositionally biased toward polar residues. 3 stretches are compositionally biased toward pro residues: residues 821–832 (PSPPPPPPPPPF), 843–854 (LPPPPPPPPPPF), and 865–874 (LPPPPPPPPW). Over residues 878–890 (YASTFETHEACST) the composition is skewed to polar residues. 3 stretches are compositionally biased toward pro residues: residues 893–904 (SPPPPPPPPPFS), 944–960 (PSPP…PPPF), and 968–1213 (SPPP…PPPM). The FH2 domain maps to 1237-1635 (FGSAAQKKSS…KALKEAEMEK (399 aa)).

The protein belongs to the formin-like family. Class-II subfamily.

The chain is Formin-like protein 20 (FH20) from Arabidopsis thaliana (Mouse-ear cress).